We begin with the raw amino-acid sequence, 72 residues long: UPF0150 protein jhp_0960 (72 aa).

This sequence belongs to the UPF0150 family.

The sequence is that of UPF0150 protein jhp_0960 from Helicobacter pylori (strain J99 / ATCC 700824) (Campylobacter pylori J99).